Here is a 274-residue protein sequence, read N- to C-terminus: MKNTVIALLALLASAGSLAATPWQKITQPIGGSAQSIGAFSNGCIVGAEALPLSAPGYQVMRTDQRRYFGHPDLVQFIQRLSNQVHNKGMGTVLIGDMGMPAGGRFNGGHASHQTGLDVDIFLQLPQTRWTSSQLLKPQALDLVASDGKHVVPSLWSPQISQLIKLAAEDSEVTRIFVNPAIKQQLCLDAGSDRQWLRKVRPWFQHRAHMHVRLRCPAGSLECEDQAPPPPGDGCGAELQSWFEPPKPGSTPPVKKTPPPLPPSCQALLDEHVL.

The signal sequence occupies residues 1–19 (MKNTVIALLALLASAGSLA). Intrachain disulfides connect cysteine 44-cysteine 265, cysteine 187-cysteine 235, and cysteine 216-cysteine 223. Zn(2+) is bound by residues histidine 110, histidine 113, aspartate 120, aspartate 147, histidine 150, and histidine 211. The segment at 224 to 263 (EDQAPPPPGDGCGAELQSWFEPPKPGSTPPVKKTPPPLPP) is disordered. Residues 245–263 (PPKPGSTPPVKKTPPPLPP) are compositionally biased toward pro residues.

Belongs to the peptidase M74 family. As to quaternary structure, dimer. Requires Zn(2+) as cofactor.

The protein localises to the periplasm. Murein endopeptidase that cleaves the D-alanyl-meso-2,6-diamino-pimelyl amide bond that connects peptidoglycan strands. Likely plays a role in the removal of murein from the sacculus. The polypeptide is Penicillin-insensitive murein endopeptidase (Klebsiella pneumoniae subsp. pneumoniae (strain ATCC 700721 / MGH 78578)).